The primary structure comprises 303 residues: 3-methyl-2-oxobutanoate hydroxymethyltransferase (303 aa).

Residues 1-10 (MDSSGTVRNQ) are compositionally biased toward polar residues. A disordered region spans residues 1–41 (MDSSGTVRNQTSDDHSRPADAAGTAATLYGAPAETRSPRRS). Mg(2+)-binding residues include D84 and D123. Residues 84 to 85 (DS), D123, and K153 each bind 3-methyl-2-oxobutanoate. E155 provides a ligand contact to Mg(2+). Residue E221 is the Proton acceptor of the active site.

The protein belongs to the PanB family. As to quaternary structure, homodecamer; pentamer of dimers. Requires Mg(2+) as cofactor.

Its subcellular location is the cytoplasm. It carries out the reaction 3-methyl-2-oxobutanoate + (6R)-5,10-methylene-5,6,7,8-tetrahydrofolate + H2O = 2-dehydropantoate + (6S)-5,6,7,8-tetrahydrofolate. It functions in the pathway cofactor biosynthesis; (R)-pantothenate biosynthesis; (R)-pantoate from 3-methyl-2-oxobutanoate: step 1/2. In terms of biological role, catalyzes the reversible reaction in which hydroxymethyl group from 5,10-methylenetetrahydrofolate is transferred onto alpha-ketoisovalerate to form ketopantoate. The polypeptide is 3-methyl-2-oxobutanoate hydroxymethyltransferase (Frankia alni (strain DSM 45986 / CECT 9034 / ACN14a)).